We begin with the raw amino-acid sequence, 261 residues long: tRNA pseudouridine synthase A (261 aa).

Residue aspartate 51 is the Nucleophile of the active site. Tyrosine 109 contributes to the substrate binding site.

It belongs to the tRNA pseudouridine synthase TruA family. As to quaternary structure, homodimer.

It catalyses the reaction uridine(38/39/40) in tRNA = pseudouridine(38/39/40) in tRNA. In terms of biological role, formation of pseudouridine at positions 38, 39 and 40 in the anticodon stem and loop of transfer RNAs. The polypeptide is tRNA pseudouridine synthase A (Idiomarina loihiensis (strain ATCC BAA-735 / DSM 15497 / L2-TR)).